Reading from the N-terminus, the 810-residue chain is Phenylalanine--tRNA ligase beta subunit (810 aa).

The region spanning 39–150 (RSWAAGVVLG…LDLPSGSPVG (112 aa)) is the tRNA-binding domain. Residues 407-495 (RGEAIINLRL…RLYGYDHFCE (89 aa)) form the B5 domain. The Mg(2+) site is built by D473, D479, E482, and E483. The FDX-ACB domain maps to 716–809 (SPYPAVARDL…LTKQFAVSLR (94 aa)).

This sequence belongs to the phenylalanyl-tRNA synthetase beta subunit family. Type 1 subfamily. In terms of assembly, tetramer of two alpha and two beta subunits. Mg(2+) is required as a cofactor.

It is found in the cytoplasm. The enzyme catalyses tRNA(Phe) + L-phenylalanine + ATP = L-phenylalanyl-tRNA(Phe) + AMP + diphosphate + H(+). This is Phenylalanine--tRNA ligase beta subunit (pheT) from Synechocystis sp. (strain ATCC 27184 / PCC 6803 / Kazusa).